The sequence spans 447 residues: Cobyrinate a,c-diamide synthase (447 aa).

In terms of domain architecture, GATase cobBQ-type spans 252-439 (KIAIAFDESF…AHQHAVGNPY (188 aa)). Cys-331 functions as the Nucleophile in the catalytic mechanism.

The protein belongs to the CobB/CbiA family. It depends on Mg(2+) as a cofactor.

It catalyses the reaction cob(II)yrinate + 2 L-glutamine + 2 ATP + 2 H2O = cob(II)yrinate a,c diamide + 2 L-glutamate + 2 ADP + 2 phosphate + 2 H(+). It carries out the reaction Ni-sirohydrochlorin + 2 L-glutamine + 2 ATP + 2 H2O = Ni-sirohydrochlorin a,c-diamide + 2 L-glutamate + 2 ADP + 2 phosphate + 2 H(+). The protein operates within cofactor biosynthesis; adenosylcobalamin biosynthesis; cob(II)yrinate a,c-diamide from sirohydrochlorin (anaerobic route): step 10/10. Its function is as follows. Catalyzes the ATP-dependent amidation of the two carboxylate groups at positions a and c of cobyrinate, using either L-glutamine or ammonia as the nitrogen source. Involved in the biosynthesis of the unique nickel-containing tetrapyrrole coenzyme F430, the prosthetic group of methyl-coenzyme M reductase (MCR), which plays a key role in methanogenesis and anaerobic methane oxidation. Catalyzes the ATP-dependent amidation of the two carboxylate groups at positions a and c of Ni-sirohydrochlorin, using L-glutamine or ammonia as the nitrogen source. This Methanococcus vannielii (strain ATCC 35089 / DSM 1224 / JCM 13029 / OCM 148 / SB) protein is Cobyrinate a,c-diamide synthase.